The sequence spans 172 residues: Myosin regulatory light polypeptide 9 (172 aa).

Basic residues predominate over residues M1–Q16. The disordered stretch occupies residues M1–S20. At S2 the chain carries N-acetylserine. T19 bears the Phosphothreonine; by MLCK, CIT and ROCK2 mark. S20 bears the Phosphoserine; by CDC42BP, CIT, MLCK, PAK1, ROCK1, ROCK2, DAPK1, DAPK2 and ZIPK/DAPK3 mark. EF-hand domains lie at S29–N64, D98–R133, and F134–D169. Ca(2+) is bound by residues D42, N44, D46, and D53.

As to quaternary structure, myosin is a hexamer of 2 heavy chains and 4 light chains: interacts with myosin heavy chain MYO19. Interacts with LUZP1; the interaction results in inhibition of phosphorylation of MYL9 by DAPK3. Post-translationally, phosphorylation increases the actin-activated myosin ATPase activity and thereby regulates the contractile activity. It is required to generate the driving force in the migration of the cells but not necessary for localization of myosin-2 at the leading edge. Phosphorylation is required for myotube formation. Phosphorylated by DAPK3; DAPK3-mediated phosphorylation is inhibited by LUZP1.

It localises to the cytoplasm. The protein localises to the cytoskeleton. It is found in the cell cortex. In terms of biological role, myosin regulatory subunit that plays an important role in regulation of both smooth muscle and nonmuscle cell contractile activity via its phosphorylation. Implicated in cytokinesis, receptor capping, and cell locomotion. In myoblasts, may regulate PIEZO1-dependent cortical actomyosin assembly involved in myotube formation. The sequence is that of Myosin regulatory light polypeptide 9 (MYL9) from Bos taurus (Bovine).